Consider the following 245-residue polypeptide: 14-3-3 protein zeta (245 aa).

Belongs to the 14-3-3 family. Homodimer.

The protein localises to the cytoplasm. Its function is as follows. Adapter protein implicated in the regulation of a large spectrum of both general and specialized signaling pathways. Binds to a large number of partners, usually by recognition of a phosphoserine or phosphothreonine motif. Binding generally results in the modulation of the activity of the binding partner. The protein is 14-3-3 protein zeta (ywhaz) of Xenopus tropicalis (Western clawed frog).